The following is a 250-amino-acid chain: 2,3-bisphosphoglycerate-dependent phosphoglycerate mutase (250 aa).

Substrate contacts are provided by residues 8–15, 21–22, Arg-60, 87–90, Lys-98, 114–115, and 183–184; these read RHGQSAWN, TG, ERHY, RR, and GN. His-9 (tele-phosphohistidine intermediate) is an active-site residue. The active-site Proton donor/acceptor is the Glu-87.

The protein belongs to the phosphoglycerate mutase family. BPG-dependent PGAM subfamily. Homodimer.

It carries out the reaction (2R)-2-phosphoglycerate = (2R)-3-phosphoglycerate. It participates in carbohydrate degradation; glycolysis; pyruvate from D-glyceraldehyde 3-phosphate: step 3/5. Its function is as follows. Catalyzes the interconversion of 2-phosphoglycerate and 3-phosphoglycerate. The sequence is that of 2,3-bisphosphoglycerate-dependent phosphoglycerate mutase from Nitratidesulfovibrio vulgaris (strain ATCC 29579 / DSM 644 / CCUG 34227 / NCIMB 8303 / VKM B-1760 / Hildenborough) (Desulfovibrio vulgaris).